Here is a 385-residue protein sequence, read N- to C-terminus: MARLGLLLLLLLALPPHFSSVSWPDTAQGTMANLILTALEKATLFLEDRLPTINLDGVVGFQVLEVQLRGVQEKWAHKPLLQPLSMRAGQMANTLSALLQKSIFYLKQSDPTYLREFQPSIQPGFWKLPNDWTRTNASLVYPWLEPLDSFSEESSDVCLVQLLGTGTDSSQPCRLSNFCRTLMTKAGCSGYSLSHQLLFFLWARMQGCTEGLFLQSQHYMDIFCANMMELNHRAEAVGYAYPTQDLFMENIMFCGMAGFSDFYKLRWLEAILSWQNPQVGCFGRPDTKGEPSEVPHQQGILRRVRRREKLFADGCSCHNTATAVAALGGFLYILAEYHPDNGDAHPEYYPNHGDPYSSSQSPASNYQDGAAGPDVQRTGRPLSVS.

A signal peptide spans M1–S20. The interval A344 to S385 is disordered. The span at Y356–Q367 shows a compositional bias: polar residues.

The protein belongs to the UPF0764 family. Homodimer. In terms of processing, glycosylated. Predominantly expressed in thyroid tissue.

The protein resides in the secreted. The polypeptide is UPF0764 protein C16orf89 homolog (Mus musculus (Mouse)).